We begin with the raw amino-acid sequence, 418 residues long: Tektin-1 (418 aa).

Coiled-coil stretches lie at residues 21 to 107, 134 to 177, 266 to 308, and 333 to 384; these read KNQY…TLKE, HELI…DLKD, NGLK…DQEG, and AQYR…NTIY.

It belongs to the tektin family. In terms of assembly, microtubule inner protein component of sperm flagellar doublet microtubules. Post-translationally, ubiquitinated, leading to its degradation. Deubiquitinated by USP16, promoting its stability. In terms of tissue distribution, predominantly expressed in testis. Expressed in airway epithelial cells.

The protein localises to the cytoplasm. The protein resides in the cytoskeleton. It localises to the cilium axoneme. It is found in the flagellum axoneme. Functionally, microtubule inner protein (MIP) part of the dynein-decorated doublet microtubules (DMTs) in cilia and flagellar axoneme. Forms filamentous polymers in the walls of ciliary and flagellar microtubules. The chain is Tektin-1 (TEKT1) from Homo sapiens (Human).